The following is a 329-amino-acid chain: GTPase Obg (329 aa).

An Obg domain is found at 1-159 (MQFIDQARIT…WPLQLELKLL (159 aa)). Residues 160 to 328 (AEVGIIGLPN…LLAETWVELG (169 aa)) enclose the OBG-type G domain. ATP is bound by residues 166-173 (GLPNAGKS), 191-195 (FTTLV), 213-216 (DIPG), 280-283 (NKQE), and 309-311 (SAA). Ser-173 and Thr-193 together coordinate Mg(2+).

The protein belongs to the TRAFAC class OBG-HflX-like GTPase superfamily. OBG GTPase family. Monomer. The cofactor is Mg(2+).

It is found in the cytoplasm. An essential GTPase which binds GTP, GDP and possibly (p)ppGpp with moderate affinity, with high nucleotide exchange rates and a fairly low GTP hydrolysis rate. Plays a role in control of the cell cycle, stress response, ribosome biogenesis and in those bacteria that undergo differentiation, in morphogenesis control. The protein is GTPase Obg of Synechococcus sp. (strain CC9605).